Consider the following 358-residue polypeptide: Phospho-N-acetylmuramoyl-pentapeptide-transferase (358 aa).

The next 10 membrane-spanning stretches (helical) occupy residues 26-46 (TIYAMITALIVCFVLGPWIIR), 71-91 (TPTMGGLIILTAIILPTLLWA), 93-113 (LTNVYIWLTLFIIVGYGLIGF), 134-154 (MFWQVLLAGGVAVFLYVTPGF), 170-190 (LGIFFIPFVTLVIVGASNAVN), 197-217 (GLAIGPVAINAATYMLFAYVA), 234-254 (AGELAVICGAMVGAGLGFLWF), 261-281 (VFMGDVGSLSLGGTLGVIAVL), 286-306 (ILLVIVGGIFVIEALSVIFQV), and 335-355 (KIIVRFWIITIILALVAISTL).

The protein belongs to the glycosyltransferase 4 family. MraY subfamily. Mg(2+) is required as a cofactor.

It localises to the cell inner membrane. It catalyses the reaction UDP-N-acetyl-alpha-D-muramoyl-L-alanyl-gamma-D-glutamyl-meso-2,6-diaminopimeloyl-D-alanyl-D-alanine + di-trans,octa-cis-undecaprenyl phosphate = di-trans,octa-cis-undecaprenyl diphospho-N-acetyl-alpha-D-muramoyl-L-alanyl-D-glutamyl-meso-2,6-diaminopimeloyl-D-alanyl-D-alanine + UMP. Its pathway is cell wall biogenesis; peptidoglycan biosynthesis. In terms of biological role, catalyzes the initial step of the lipid cycle reactions in the biosynthesis of the cell wall peptidoglycan: transfers peptidoglycan precursor phospho-MurNAc-pentapeptide from UDP-MurNAc-pentapeptide onto the lipid carrier undecaprenyl phosphate, yielding undecaprenyl-pyrophosphoryl-MurNAc-pentapeptide, known as lipid I. This Trichlorobacter lovleyi (strain ATCC BAA-1151 / DSM 17278 / SZ) (Geobacter lovleyi) protein is Phospho-N-acetylmuramoyl-pentapeptide-transferase.